We begin with the raw amino-acid sequence, 141 residues long: ATP synthase F(0) complex subunit C3, mitochondrial (141 aa).

The N-terminal 66 residues, 1-66 (MFACAKLACT…REFQTTAVNR (66 aa)), are a transit peptide targeting the mitochondrion. Residues 82-102 (VGVAGSGAGIGTVFGSLIIGY) form a helical membrane-spanning segment. The residue at position 109 (lysine 109) is an N6,N6,N6-trimethyllysine. A helical membrane pass occupies residues 117–137 (ILGFALSEAMGLFCLMVAFLI).

The protein belongs to the ATPase C chain family. F-type ATPases have 2 components, CF(1) - the catalytic core - and CF(0) - the membrane proton channel. CF(1) has five subunits: alpha(3), beta(3), gamma(1), delta(1), epsilon(1). CF(0) has three main subunits: a, b and c. Interacts with TMEM70 and TMEM242. In terms of processing, trimethylated by ATPSCKMT at Lys-109. Methylation is required for proper incorporation of the C subunit into the ATP synthase complex and mitochondrial respiration.

The protein resides in the mitochondrion membrane. Its function is as follows. Mitochondrial membrane ATP synthase (F(1)F(0) ATP synthase or Complex V) produces ATP from ADP in the presence of a proton gradient across the membrane which is generated by electron transport complexes of the respiratory chain. F-type ATPases consist of two structural domains, F(1) - containing the extramembraneous catalytic core and F(0) - containing the membrane proton channel, linked together by a central stalk and a peripheral stalk. During catalysis, ATP synthesis in the catalytic domain of F(1) is coupled via a rotary mechanism of the central stalk subunits to proton translocation. Part of the complex F(0) domain. A homomeric c-ring of probably 10 subunits is part of the complex rotary element. The chain is ATP synthase F(0) complex subunit C3, mitochondrial from Bos taurus (Bovine).